Here is a 433-residue protein sequence, read N- to C-terminus: Enolase (433 aa).

Q163 contributes to the (2R)-2-phosphoglycerate binding site. E205 functions as the Proton donor in the catalytic mechanism. Mg(2+)-binding residues include D242, E286, and D313. (2R)-2-phosphoglycerate contacts are provided by K338, R367, S368, and K389. The active-site Proton acceptor is the K338.

It belongs to the enolase family. Mg(2+) is required as a cofactor.

The protein localises to the cytoplasm. It localises to the secreted. The protein resides in the cell surface. It carries out the reaction (2R)-2-phosphoglycerate = phosphoenolpyruvate + H2O. It functions in the pathway carbohydrate degradation; glycolysis; pyruvate from D-glyceraldehyde 3-phosphate: step 4/5. Catalyzes the reversible conversion of 2-phosphoglycerate (2-PG) into phosphoenolpyruvate (PEP). It is essential for the degradation of carbohydrates via glycolysis. This is Enolase from Koribacter versatilis (strain Ellin345).